Reading from the N-terminus, the 239-residue chain is VETISFSFSEFEPGNDNLTLQGAALITQSGVLQLTKINQNGMPAWDSTGRTLYTKPVHMWDSTTGTVASFETRFSFSIEQPYTRPLPADGLVFFMGPTKSKPAQGYGYLGVFNNSKQDNSYQTLAVEFDTFSNPWDPPQVPHIGIDVNSIRSIKTQPFQLDNGQVANVVIKYDAPSKILHVVLVYPSSGAIYTIAEIVDVKQVLPDWVDVGLSGATGAQRDAAETHDVYSWSFQASLPE.

Residues Asn-17 and Asn-113 are each glycosylated (N-linked (GlcNAc...) asparagine).

It belongs to the leguminous lectin family. In terms of assembly, homodimer.

Functionally, galactose and N-acetyllactosamine specific lectin. The polypeptide is Lectin (Erythrina crista-galli (Cockspur coral tree)).